The primary structure comprises 482 residues: UDP-N-acetylmuramoyl-L-alanyl-D-glutamate--2,6-diaminopimelate ligase (482 aa).

Serine 29 serves as a coordination point for UDP-N-acetyl-alpha-D-muramoyl-L-alanyl-D-glutamate. 109 to 115 (GTNGKTS) is an ATP binding site. UDP-N-acetyl-alpha-D-muramoyl-L-alanyl-D-glutamate-binding positions include 151-152 (TT), serine 178, and arginine 186. Lysine 218 is modified (N6-carboxylysine). Meso-2,6-diaminopimelate-binding positions include arginine 375, 399–402 (DNPR), glycine 451, and glutamate 455. Positions 399–402 (DNPR) match the Meso-diaminopimelate recognition motif motif.

This sequence belongs to the MurCDEF family. MurE subfamily. Mg(2+) is required as a cofactor. Post-translationally, carboxylation is probably crucial for Mg(2+) binding and, consequently, for the gamma-phosphate positioning of ATP.

It is found in the cytoplasm. The enzyme catalyses UDP-N-acetyl-alpha-D-muramoyl-L-alanyl-D-glutamate + meso-2,6-diaminopimelate + ATP = UDP-N-acetyl-alpha-D-muramoyl-L-alanyl-gamma-D-glutamyl-meso-2,6-diaminopimelate + ADP + phosphate + H(+). The protein operates within cell wall biogenesis; peptidoglycan biosynthesis. Functionally, catalyzes the addition of meso-diaminopimelic acid to the nucleotide precursor UDP-N-acetylmuramoyl-L-alanyl-D-glutamate (UMAG) in the biosynthesis of bacterial cell-wall peptidoglycan. The sequence is that of UDP-N-acetylmuramoyl-L-alanyl-D-glutamate--2,6-diaminopimelate ligase from Caldanaerobacter subterraneus subsp. tengcongensis (strain DSM 15242 / JCM 11007 / NBRC 100824 / MB4) (Thermoanaerobacter tengcongensis).